Reading from the N-terminus, the 310-residue chain is HPr kinase/phosphorylase (310 aa).

Residues histidine 136 and lysine 157 contribute to the active site. 151–158 serves as a coordination point for ATP; sequence GDSGIGKS. A Mg(2+)-binding site is contributed by serine 158. The active-site Proton acceptor; for phosphorylation activity. Proton donor; for dephosphorylation activity is aspartate 175. The interval 199–208 is important for the catalytic mechanism of both phosphorylation and dephosphorylation; that stretch reads LEIRGLGIIN. Mg(2+) is bound at residue glutamate 200. Arginine 241 is a catalytic residue. Positions 262 to 267 are important for the catalytic mechanism of dephosphorylation; that stretch reads PVRPGR.

It belongs to the HPrK/P family. As to quaternary structure, homohexamer. The cofactor is Mg(2+).

It catalyses the reaction [HPr protein]-L-serine + ATP = [HPr protein]-O-phospho-L-serine + ADP + H(+). The enzyme catalyses [HPr protein]-O-phospho-L-serine + phosphate + H(+) = [HPr protein]-L-serine + diphosphate. In terms of biological role, catalyzes the ATP- as well as the pyrophosphate-dependent phosphorylation of a specific serine residue in HPr, a phosphocarrier protein of the phosphoenolpyruvate-dependent sugar phosphotransferase system (PTS). HprK/P also catalyzes the pyrophosphate-producing, inorganic phosphate-dependent dephosphorylation (phosphorolysis) of seryl-phosphorylated HPr (P-Ser-HPr). The two antagonistic activities of HprK/P are regulated by several intracellular metabolites, which change their concentration in response to the absence or presence of rapidly metabolisable carbon sources (glucose, fructose, etc.) in the growth medium. Therefore, by controlling the phosphorylation state of HPr, HPrK/P is a sensor enzyme that plays a major role in the regulation of carbon metabolism and sugar transport: it mediates carbon catabolite repression (CCR), and regulates PTS-catalyzed carbohydrate uptake and inducer exclusion. The protein is HPr kinase/phosphorylase of Staphylococcus epidermidis (strain ATCC 35984 / DSM 28319 / BCRC 17069 / CCUG 31568 / BM 3577 / RP62A).